The chain runs to 368 residues: Isopentenyl-diphosphate delta-isomerase (368 aa).

7-8 is a substrate binding site; the sequence is RK. FMN contacts are provided by residues threonine 65, 66–68, serine 96, and asparagine 125; that span reads GMT. Position 96–98 (96–98) interacts with substrate; that stretch reads SQR. Glutamine 160 contributes to the substrate binding site. Residue glutamate 161 participates in Mg(2+) binding. FMN-binding positions include lysine 193, serine 218, threonine 223, 275 to 277, and 296 to 297; these read GIR and AL.

Belongs to the IPP isomerase type 2 family. In terms of assembly, homooctamer. Dimer of tetramers. FMN is required as a cofactor. The cofactor is NADPH. Mg(2+) serves as cofactor.

It is found in the cytoplasm. It carries out the reaction isopentenyl diphosphate = dimethylallyl diphosphate. Functionally, involved in the biosynthesis of isoprenoids. Catalyzes the 1,3-allylic rearrangement of the homoallylic substrate isopentenyl (IPP) to its allylic isomer, dimethylallyl diphosphate (DMAPP). In Saccharolobus solfataricus (strain ATCC 35092 / DSM 1617 / JCM 11322 / P2) (Sulfolobus solfataricus), this protein is Isopentenyl-diphosphate delta-isomerase.